The chain runs to 231 residues: 2-phospho-L-lactate guanylyltransferase (231 aa).

This sequence belongs to the CofC family. In terms of assembly, homodimer.

The catalysed reaction is (2S)-2-phospholactate + GTP + H(+) = (2S)-lactyl-2-diphospho-5'-guanosine + diphosphate. Its pathway is cofactor biosynthesis; coenzyme F420 biosynthesis. Its function is as follows. Guanylyltransferase that catalyzes the activation of (2S)-2-phospholactate (2-PL) as (2S)-lactyl-2-diphospho-5'-guanosine, via the condensation of 2-PL with GTP. It is involved in the biosynthesis of coenzyme F420, a hydride carrier cofactor. The chain is 2-phospho-L-lactate guanylyltransferase from Haloterrigena turkmenica (strain ATCC 51198 / DSM 5511 / JCM 9101 / NCIMB 13204 / VKM B-1734 / 4k) (Halococcus turkmenicus).